The following is a 301-amino-acid chain: MITVVTVPATTANLGPGFDCLGAALTLTNRFTFSLSDRPHVSVRGPEAAAVSSGPNNLAYRAYSRFYEYLGREAPPVYLEIDLRVPLARGLGSSATAIIGGLVGANRLAGFPLSHTEVLELAIEMEGHPDNVVPALLGGCRLAVQEDAGGWHWLEIPWDQDVVPILAIPDFELATETAREVLPPHCAYGDAIFNISHLGALLRGLETGQREWLQLALADRLHQPYRQSLIKGYPDLHRAALEAGAHGLVISGAGPTLLALGDPVTASAIATALKETWAKFDVQAQVEILAIQHQGTTVCDR.

86–96 provides a ligand contact to ATP; it reads PLARGLGSSAT.

The protein belongs to the GHMP kinase family. Homoserine kinase subfamily.

It localises to the cytoplasm. It carries out the reaction L-homoserine + ATP = O-phospho-L-homoserine + ADP + H(+). It participates in amino-acid biosynthesis; L-threonine biosynthesis; L-threonine from L-aspartate: step 4/5. Its function is as follows. Catalyzes the ATP-dependent phosphorylation of L-homoserine to L-homoserine phosphate. The protein is Homoserine kinase of Thermosynechococcus vestitus (strain NIES-2133 / IAM M-273 / BP-1).